Here is a 215-residue protein sequence, read N- to C-terminus: Urease accessory protein UreG 2 (215 aa).

11–18 (GPVGSGKT) serves as a coordination point for GTP.

Belongs to the SIMIBI class G3E GTPase family. UreG subfamily. As to quaternary structure, homodimer. UreD, UreF and UreG form a complex that acts as a GTP-hydrolysis-dependent molecular chaperone, activating the urease apoprotein by helping to assemble the nickel containing metallocenter of UreC. The UreE protein probably delivers the nickel.

The protein localises to the cytoplasm. Its function is as follows. Facilitates the functional incorporation of the urease nickel metallocenter. This process requires GTP hydrolysis, probably effectuated by UreG. This is Urease accessory protein UreG 2 from Methylorubrum extorquens (strain PA1) (Methylobacterium extorquens).